The following is a 385-amino-acid chain: Probable di-N-acetylchitobiase 2 (385 aa).

The N-terminal stretch at 1 to 15 is a signal peptide; the sequence is MRIILLLFLIVFVVA. Positions 16 to 377 constitute a GH18 domain; the sequence is QSSSSSSSSG…DALASFFPQS (362 aa). Residues Asn51 and Asn101 are each glycosylated (N-linked (GlcNAc...) asparagine). Glu129 functions as the Proton donor in the catalytic mechanism. N-linked (GlcNAc...) asparagine glycosylation is found at Asn223, Asn272, and Asn296.

Belongs to the glycosyl hydrolase 18 family.

It is found in the lysosome. Its function is as follows. Involved in the degradation of asparagine-linked glycoproteins. May hydrolyze of N-acetyl-beta-D-glucosamine (1-4)N-acetylglucosamine chitobiose core from the reducing end of the bond. The polypeptide is Probable di-N-acetylchitobiase 2 (ctbs2) (Dictyostelium discoideum (Social amoeba)).